Consider the following 56-residue polypeptide: Conotoxin Cal6.41b (56 aa).

An N-terminal signal peptide occupies residues 1 to 23 (MSGSGAMLLGLLILVAMATSLDT). Disulfide bonds link Cys27/Cys41, Cys33/Cys50, and Cys40/Cys54.

In terms of tissue distribution, expressed by the venom duct.

Its subcellular location is the secreted. Functionally, probable neurotoxin. The sequence is that of Conotoxin Cal6.41b from Californiconus californicus (California cone).